The primary structure comprises 87 residues: Small ribosomal subunit protein bS16 (87 aa).

It belongs to the bacterial ribosomal protein bS16 family.

The protein is Small ribosomal subunit protein bS16 of Aster yellows witches'-broom phytoplasma (strain AYWB).